Consider the following 198-residue polypeptide: ATP-dependent Clp protease proteolytic subunit (198 aa).

Serine 98 acts as the Nucleophile in catalysis. Residue histidine 123 is part of the active site.

It belongs to the peptidase S14 family. As to quaternary structure, fourteen ClpP subunits assemble into 2 heptameric rings which stack back to back to give a disk-like structure with a central cavity, resembling the structure of eukaryotic proteasomes.

It localises to the cytoplasm. The catalysed reaction is Hydrolysis of proteins to small peptides in the presence of ATP and magnesium. alpha-casein is the usual test substrate. In the absence of ATP, only oligopeptides shorter than five residues are hydrolyzed (such as succinyl-Leu-Tyr-|-NHMec, and Leu-Tyr-Leu-|-Tyr-Trp, in which cleavage of the -Tyr-|-Leu- and -Tyr-|-Trp bonds also occurs).. Its function is as follows. Cleaves peptides in various proteins in a process that requires ATP hydrolysis. Has a chymotrypsin-like activity. Plays a major role in the degradation of misfolded proteins. The sequence is that of ATP-dependent Clp protease proteolytic subunit from Levilactobacillus brevis (strain ATCC 367 / BCRC 12310 / CIP 105137 / JCM 1170 / LMG 11437 / NCIMB 947 / NCTC 947) (Lactobacillus brevis).